The following is a 382-amino-acid chain: Cytochrome b (382 aa).

Helical transmembrane passes span Phe33–Met53, Trp77–Ile98, Trp113–Leu133, and Phe178–Leu198. His83 and His97 together coordinate heme b. Heme b contacts are provided by His182 and His196. An a ubiquinone-binding site is contributed by His201. Transmembrane regions (helical) follow at residues Leu226–Thr246, Leu288–Gln308, Leu320–Gly340, and Phe347–Pro367.

This sequence belongs to the cytochrome b family. In terms of assembly, the cytochrome bc1 complex contains 3 respiratory subunits (MT-CYB, CYC1 and UQCRFS1), 2 core proteins (UQCRC1 and UQCRC2) and probably 6 low-molecular weight proteins. Heme b serves as cofactor.

It localises to the mitochondrion inner membrane. Its function is as follows. Component of the ubiquinol-cytochrome c reductase complex (complex III or cytochrome b-c1 complex) that is part of the mitochondrial respiratory chain. The b-c1 complex mediates electron transfer from ubiquinol to cytochrome c. Contributes to the generation of a proton gradient across the mitochondrial membrane that is then used for ATP synthesis. The polypeptide is Cytochrome b (mt-cyb) (Sigmops gracilis (Slender fangjaw)).